Here is a 306-residue protein sequence, read N- to C-terminus: Follistatin-related protein 1 (306 aa).

Positions 1-18 are cleaved as a signal peptide; that stretch reads MWKRWLALALVAVAWVRA. A Follistatin-like domain is found at 28–51; sequence ICANVFCGAGRECAVTEKGEPTCL. Cystine bridges form between Cys29/Cys40, Cys34/Cys50, Cys52/Cys82, Cys56/Cys75, and Cys64/Cys96. The Kazal-like domain maps to 46–98; sequence GEPTCLCIEQCKPHKRPVCGSNGKTYLNHCELHRDACLTGSKIQVDYDGHCKE. The N-linked (GlcNAc...) asparagine glycan is linked to Asn142. The 35-residue stretch at 142-176 folds into the EF-hand 1 domain; sequence NYSEILDKYFKNFDNGDSRLDSSEFLKFVEQNETA. Ser163 carries the phosphoserine modification. Asn173 and Asn178 each carry an N-linked (GlcNAc...) asparagine glycan. An EF-hand 2 domain is found at 191–226; that stretch reads LRGLCVDALIELSDENADWKLSFQEFLKCLNPSFNP. The 55-residue stretch at 231 to 285 folds into the VWFC domain; sequence CALEDETYADGAETEVDCNRCVCACGNWVCTAMTCDGKNQKGAQTQTEEEMTRYV.

In terms of assembly, homodimer. Interacts with SCN10A. Interacts with DIP2A; DIP2A may act as a cell surface receptor for FSTL1. Interacts with BMP4. Interacts with CD14; this interaction promotes TL4-mediated signaling cascade.

The protein localises to the secreted. Functionally, secreted glycoprotein that is involved in various physiological processes, such as angiogenesis, regulation of the immune response, cell proliferation and differentiation. Plays a role in the development of the central nervous system, skeletal system, lungs, and ureter. Promotes endothelial cell survival, migration and differentiation into network structures in an AKT-dependent manner. Also promotes survival of cardiac myocytes. Initiates various signaling cascades by activating different receptors on the cell surface such as DIP2A, TLR4 or BMP receptors. The sequence is that of Follistatin-related protein 1 (FSTL1) from Pongo abelii (Sumatran orangutan).